The following is a 140-amino-acid chain: Nucleoside diphosphate kinase (140 aa).

Residues Lys10, Phe58, Arg86, Thr92, Arg103, and Asn113 each contribute to the ATP site. Catalysis depends on His116, which acts as the Pros-phosphohistidine intermediate.

The protein belongs to the NDK family. Homotetramer. The cofactor is Mg(2+).

It is found in the cytoplasm. The enzyme catalyses a 2'-deoxyribonucleoside 5'-diphosphate + ATP = a 2'-deoxyribonucleoside 5'-triphosphate + ADP. The catalysed reaction is a ribonucleoside 5'-diphosphate + ATP = a ribonucleoside 5'-triphosphate + ADP. Functionally, major role in the synthesis of nucleoside triphosphates other than ATP. The ATP gamma phosphate is transferred to the NDP beta phosphate via a ping-pong mechanism, using a phosphorylated active-site intermediate. The protein is Nucleoside diphosphate kinase of Haemophilus influenzae (strain PittEE).